The primary structure comprises 371 residues: uncharacterized protein (371 aa).

Solcar repeat units follow at residues 3-98 (DDSL…CKVL), 131-276 (RYWG…FKSF), and 284-369 (KSNF…VRKW). A run of 6 helical transmembrane segments spans residues 9-29 (AIAG…LDVV), 73-93 (GVGP…VVYE), 137-157 (IFSA…IWVV), 253-273 (LFPS…YEYF), 290-310 (VLAA…HEVL), and 341-362 (YYSG…TFLS).

Belongs to the mitochondrial carrier (TC 2.A.29) family.

It localises to the mitochondrion inner membrane. This is an uncharacterized protein from Schizosaccharomyces pombe (strain 972 / ATCC 24843) (Fission yeast).